Here is a 310-residue protein sequence, read N- to C-terminus: Tetrahydromethanopterin S-methyltransferase subunit H (310 aa).

Belongs to the MtrH family. The complex is composed of 8 subunits; MtrA, MtrB, MtrC, MtrD, MtrE, MtrF, MtrG and MtrH.

The enzyme catalyses 5-methyl-5,6,7,8-tetrahydromethanopterin + coenzyme M + 2 Na(+)(in) = 5,6,7,8-tetrahydromethanopterin + methyl-coenzyme M + 2 Na(+)(out). It participates in one-carbon metabolism; methanogenesis from CO(2); methyl-coenzyme M from 5,10-methylene-5,6,7,8-tetrahydromethanopterin: step 2/2. Functionally, part of a complex that catalyzes the formation of methyl-coenzyme M and tetrahydromethanopterin from coenzyme M and methyl-tetrahydromethanopterin. This is an energy-conserving, sodium-ion translocating step. MtrH catalyzes the transfer of the methyl group from methyl-tetrahydromethanopterin to the corrinoid prosthetic group of MtrA. The polypeptide is Tetrahydromethanopterin S-methyltransferase subunit H (Methanothermobacter thermautotrophicus (strain ATCC 29096 / DSM 1053 / JCM 10044 / NBRC 100330 / Delta H) (Methanobacterium thermoautotrophicum)).